A 62-amino-acid polypeptide reads, in one-letter code: Protein YmcF (62 aa).

Belongs to the YmcF/YnqF peptide family.

The protein is Protein YmcF of Escherichia coli (strain K12).